The chain runs to 638 residues: ATP-dependent zinc metalloprotease FtsH (638 aa).

Topologically, residues 1-11 (MSQKGKNKKWR) are cytoplasmic. The helical transmembrane segment at 12-32 (SAGLYALLAIVLISLATTFLG) threads the bilayer. The Lumenal segment spans residues 33 to 114 (NRPPERLEIS…LAVRPVQEEG (82 aa)). The helical transmembrane segment at 115–135 (LLGRILSTFFLPVLLLLGLFF) threads the bilayer. The Cytoplasmic segment spans residues 136-638 (LLRRAQNGPG…TLPMAVNAGA (503 aa)). An ATP-binding site is contributed by 209–216 (GPPGTGKT). His431 serves as a coordination point for Zn(2+). Glu432 is a catalytic residue. Residues His435 and Asp510 each contribute to the Zn(2+) site.

This sequence in the central section; belongs to the AAA ATPase family. It in the C-terminal section; belongs to the peptidase M41 family. As to quaternary structure, homohexamer. The cofactor is Zn(2+).

Its subcellular location is the cellular thylakoid membrane. Acts as a processive, ATP-dependent zinc metallopeptidase for both cytoplasmic and membrane proteins. Plays a role in the quality control of integral membrane proteins. The protein is ATP-dependent zinc metalloprotease FtsH of Synechococcus sp. (strain JA-2-3B'a(2-13)) (Cyanobacteria bacterium Yellowstone B-Prime).